The primary structure comprises 131 residues: D-ribose pyranase (131 aa).

His-20 (proton donor) is an active-site residue. Substrate-binding positions include Asp-28, His-98, and 120–122; that span reads YAN.

It belongs to the RbsD / FucU family. RbsD subfamily. In terms of assembly, homodecamer.

The protein localises to the cytoplasm. It catalyses the reaction beta-D-ribopyranose = beta-D-ribofuranose. It functions in the pathway carbohydrate metabolism; D-ribose degradation; D-ribose 5-phosphate from beta-D-ribopyranose: step 1/2. Catalyzes the interconversion of beta-pyran and beta-furan forms of D-ribose. In Bacillus cereus (strain AH187), this protein is D-ribose pyranase.